The primary structure comprises 66 residues: 14-3-3-like protein 2 (66 aa).

It belongs to the 14-3-3 family.

The sequence is that of 14-3-3-like protein 2 from Pseudotsuga menziesii (Douglas-fir).